The chain runs to 190 residues: NADH-quinone oxidoreductase subunit B (190 aa).

4 residues coordinate [4Fe-4S] cluster: Cys-39, Cys-40, Cys-104, and Cys-135.

It belongs to the complex I 20 kDa subunit family. NDH-1 is composed of 14 different subunits. Subunits NuoB, C, D, E, F, and G constitute the peripheral sector of the complex. Requires [4Fe-4S] cluster as cofactor.

It is found in the cell inner membrane. The enzyme catalyses a quinone + NADH + 5 H(+)(in) = a quinol + NAD(+) + 4 H(+)(out). Functionally, NDH-1 shuttles electrons from NADH, via FMN and iron-sulfur (Fe-S) centers, to quinones in the respiratory chain. The immediate electron acceptor for the enzyme in this species is believed to be a menaquinone. Couples the redox reaction to proton translocation (for every two electrons transferred, four hydrogen ions are translocated across the cytoplasmic membrane), and thus conserves the redox energy in a proton gradient. In Prosthecochloris aestuarii (strain DSM 271 / SK 413), this protein is NADH-quinone oxidoreductase subunit B.